We begin with the raw amino-acid sequence, 179 residues long: Natural killer cells antigen CD94 (179 aa).

Over 1–10 (MAVFKTTLWR) the chain is Cytoplasmic. A helical; Signal-anchor for type II membrane protein membrane pass occupies residues 11 to 31 (LISGTLGIICLSLMATLGILL). The Extracellular segment spans residues 32 to 179 (KNSFTKLSIE…NRYICKQQLI (148 aa)). 2 disulfides stabilise this stretch: Cys58–Cys70 and Cys61–Cys72. Residues 68-175 (YRCNCYFISS…CEDKNRYICK (108 aa)) form the C-type lectin domain. 2 N-linked (GlcNAc...) asparagine glycosylation sites follow: Asn83 and Asn132. 2 disulfide bridges follow: Cys89–Cys174 and Cys152–Cys166.

As to quaternary structure, can form disulfide-bonded heterodimer with NKG2 family members KLRC1 and KLRC2. KLRD1-KLRC1 heterodimer interacts with peptide-bound MHC-E-B2M heterotrimeric complex. KLRD1 plays a prominent role in directly interacting with MHC-E. KLRD1-KLRC1 interacts with much higher affinity with peptide-bound MHC-E-B2M than KLRD1-KLRC2. Interacts with the adapter protein TYROBP/DAP12; this interaction is required for cell surface expression and cell activation. In terms of tissue distribution, natural killer cells.

It is found in the cell membrane. Its function is as follows. Immune receptor involved in self-nonself discrimination. In complex with KLRC1 or KLRC2 on cytotoxic and regulatory lymphocyte subsets, recognizes non-classical major histocompatibility (MHC) class Ib molecule MHC-E loaded with self-peptides derived from the signal sequence of classical MHC class Ia and non-classical MHC class Ib molecules. Enables cytotoxic cells to monitor the expression of MHC class I molecules in healthy cells and to tolerate self. Primarily functions as a ligand binding subunit as it lacks the capacity to signal. KLRD1-KLRC1 acts as an immune inhibitory receptor. Key inhibitory receptor on natural killer (NK) cells that regulates their activation and effector functions. Dominantly counteracts T cell receptor signaling on a subset of memory/effector CD8-positive T cells as part of an antigen-driven response to avoid autoimmunity. On intraepithelial CD8-positive gamma-delta regulatory T cells triggers TGFB1 secretion, which in turn limits the cytotoxic programming of intraepithelial CD8-positive alpha-beta T cells, distinguishing harmless from pathogenic antigens. In MHC-E-rich tumor microenvironment, acts as an immune inhibitory checkpoint and may contribute to progressive loss of effector functions of NK cells and tumor-specific T cells, a state known as cell exhaustion. Upon MHC-E-peptide binding, transmits intracellular signals through KLRC1 immunoreceptor tyrosine-based inhibition motifs (ITIMs) by recruiting INPP5D/SHIP-1 and INPPL1/SHIP-2 tyrosine phosphatases to ITIMs, and ultimately opposing signals transmitted by activating receptors through dephosphorylation of proximal signaling molecules. In terms of biological role, KLRD1-KLRC2 acts as an immune activating receptor. On cytotoxic lymphocyte subsets recognizes MHC-E loaded with signal sequence-derived peptides from non-classical MHC class Ib MHC-G molecules, likely playing a role in the generation and effector functions of adaptive NK cells and in maternal-fetal tolerance during pregnancy. Regulates the effector functions of terminally differentiated cytotoxic lymphocyte subsets, and in particular may play a role in adaptive NK cell response to viral infection. Upon MHC-E-peptide binding, transmits intracellular signals via the adapter protein TYROBP/DAP12, triggering the phosphorylation of proximal signaling molecules and cell activation. The protein is Natural killer cells antigen CD94 (KLRD1) of Pan troglodytes (Chimpanzee).